Reading from the N-terminus, the 511-residue chain is S-layer protein B (511 aa).

The first 24 residues, 1-24 (MVKYMNLIVLGMLMFGVFVTLSLG), serve as a signal peptide directing secretion. Residues 358–392 (IQRLQSEVSVLESEVDQLKVEIQSLNETLTLQASE) adopt a coiled-coil conformation. A helical membrane pass occupies residues 487-507 (GGIILGVIALIIAIVAVVLVF).

It belongs to the Sulfolobales SlaB family. In terms of assembly, the mushroom-shaped unit cells of the Sulfolobales' S-layers may consist of three SlaB subunits and six SlaA subunits.

The protein resides in the secreted. It localises to the cell wall. Its subcellular location is the S-layer. The protein localises to the cell membrane. Its function is as follows. S-layer small protein. May anchor the complex to the cell membrane. This Acidianus ambivalens (Desulfurolobus ambivalens) protein is S-layer protein B.